The following is a 185-amino-acid chain: Elongation factor P (185 aa).

Belongs to the elongation factor P family.

It is found in the cytoplasm. It participates in protein biosynthesis; polypeptide chain elongation. Its function is as follows. Involved in peptide bond synthesis. Stimulates efficient translation and peptide-bond synthesis on native or reconstituted 70S ribosomes in vitro. Probably functions indirectly by altering the affinity of the ribosome for aminoacyl-tRNA, thus increasing their reactivity as acceptors for peptidyl transferase. The sequence is that of Elongation factor P from Petrotoga mobilis (strain DSM 10674 / SJ95).